Here is a 106-residue protein sequence, read N- to C-terminus: Tubulin-specific chaperone A (106 aa).

At S94 the chain carries Phosphoserine.

The protein belongs to the TBCA family.

It is found in the cytoplasm. The protein resides in the cytoskeleton. In terms of biological role, tubulin-folding protein; involved in the early step of the tubulin folding pathway. The sequence is that of Tubulin-specific chaperone A (RBL2) from Saccharomyces cerevisiae (strain ATCC 204508 / S288c) (Baker's yeast).